A 147-amino-acid chain; its full sequence is Large ribosomal subunit protein uL15 (147 aa).

The segment at 1–57 is disordered; it reads MRLHDVKPQKGSKKRKKRVARGISAGQGASAGLGMRGQKSRSGSGTRPGFEGGQQPL. A compositionally biased stretch (basic residues) spans 10-20; sequence KGSKKRKKRVA.

The protein belongs to the universal ribosomal protein uL15 family. In terms of assembly, part of the 50S ribosomal subunit.

In terms of biological role, binds to the 23S rRNA. The protein is Large ribosomal subunit protein uL15 of Nostoc punctiforme (strain ATCC 29133 / PCC 73102).